The primary structure comprises 414 residues: Protein SOSEKI 2 (414 aa).

Positions Arg-44–Asp-135 are DIX-like oligomerization domain. The segment at Ser-171 to Arg-273 is disordered. Residues Asp-173–Leu-192 show a composition bias toward acidic residues. Positions Pro-205–Lys-229 are enriched in polar residues. Positions Thr-230–Asp-242 are enriched in basic and acidic residues. Positions Cys-283–Gly-284 match the Association to cell membranes motif.

Belongs to the SOSEKI family. In terms of assembly, homodimer. Forms long polymer filaments with other SOKs proteins polymers (e.g. SOK1, SOK2, SOK3 and SOK4) crucial for polar localization and biological activity. Binds to ANGUSTIFOLIA (AN). As to expression, expressed during embryogenesis and in roots.

The protein resides in the cell membrane. Its function is as follows. Part of a three-gene cluster containing FLC, UFC and DFC, which is coordinately regulated in response to vernalization. Also regulated by FLX. SOSEKI proteins (SOK1-5) locally interpret global polarity cues and can influence cell division orientation to coordinate cell polarization relative to body axes, probably by guiding ANGUSTIFOLIA (AN) polarized localization. This chain is Protein SOSEKI 2, found in Arabidopsis thaliana (Mouse-ear cress).